A 424-amino-acid polypeptide reads, in one-letter code: GTPase Obg (424 aa).

An Obg domain is found at 1–158; sequence MFVDRAEVFV…RYISLELKIL (158 aa). Residues 21 to 42 form a disordered region; it reads SFRREKYVPRGGPDGGDGGKGG. Residues 32–42 show a composition bias toward gly residues; it reads GPDGGDGGKGG. The 173-residue stretch at 159–331 folds into the OBG-type G domain; the sequence is ADVGLLGFPN…LMKEAAAMLT (173 aa). GTP-binding positions include 165-172, 190-194, 212-215, 282-285, and 312-314; these read GFPNVGKS, FTTLS, DIPG, NKAD, and SAA. Positions 172 and 192 each coordinate Mg(2+). The 80-residue stretch at 345 to 424 folds into the OCT domain; sequence KFIPEEKRFT…LNDFEFDYIL (80 aa).

It belongs to the TRAFAC class OBG-HflX-like GTPase superfamily. OBG GTPase family. As to quaternary structure, monomer. The cofactor is Mg(2+).

It localises to the cytoplasm. An essential GTPase which binds GTP, GDP and possibly (p)ppGpp with moderate affinity, with high nucleotide exchange rates and a fairly low GTP hydrolysis rate. Plays a role in control of the cell cycle, stress response, ribosome biogenesis and in those bacteria that undergo differentiation, in morphogenesis control. In Clostridium kluyveri (strain NBRC 12016), this protein is GTPase Obg.